Here is a 385-residue protein sequence, read N- to C-terminus: Transcription termination factor 2, mitochondrial (385 aa).

The transit peptide at 1–35 (MLWKLLLRSQSCRLCSFRKMRSPPKYRPFLACFTY) directs the protein to the mitochondrion.

It belongs to the mTERF family. As to quaternary structure, monomer. In terms of tissue distribution, expressed in skeletal muscle, heart, liver and pancreas.

Its subcellular location is the mitochondrion. It localises to the mitochondrion matrix. The protein localises to the mitochondrion nucleoid. In terms of biological role, binds mitochondrial DNA and plays a role in the regulation of transcription of mitochondrial mRNA and rRNA species. In Homo sapiens (Human), this protein is Transcription termination factor 2, mitochondrial (MTERF2).